The chain runs to 182 residues: uncharacterized protein (182 aa).

The protein belongs to the mimivirus L6/L7/L57 family.

This is an uncharacterized protein from Acanthamoeba polyphaga mimivirus (APMV).